The chain runs to 181 residues: uncharacterized protein (181 aa).

A disordered region spans residues 126–148 (SYKDKEEEEDEDPEEDDDDPRVQ). A compositionally biased stretch (acidic residues) spans 131-144 (EEEEDEDPEEDDDD).

The protein belongs to the chlamydial CPn_0422/CT_273/TC_0545 family.

This is an uncharacterized protein from Chlamydia pneumoniae (Chlamydophila pneumoniae).